A 364-amino-acid chain; its full sequence is DNA replication and repair protein RecF (364 aa).

An ATP-binding site is contributed by 33-40; that stretch reads GENGSGKT.

The protein belongs to the RecF family.

The protein localises to the cytoplasm. Its function is as follows. The RecF protein is involved in DNA metabolism; it is required for DNA replication and normal SOS inducibility. RecF binds preferentially to single-stranded, linear DNA. It also seems to bind ATP. The chain is DNA replication and repair protein RecF from Rickettsia felis (strain ATCC VR-1525 / URRWXCal2) (Rickettsia azadi).